A 162-amino-acid chain; its full sequence is Sorting nexin-3 (162 aa).

The tract at residues 1–23 (MPREFKSFGSTEKSLLSKGHGEP) is disordered. The region spanning 38-161 (IEVHNPKTHI…VRFIEAEKFV (124 aa)) is the PX domain. A 1,2-diacyl-sn-glycero-3-phospho-(1D-myo-inositol-3-phosphate) is bound by residues Arg81, Ser83, Lys112, and Arg127.

This sequence belongs to the sorting nexin family. Monomer. Interacts with RBD2, YIF1, YIP1 and YIP5.

The protein localises to the cytoplasm. It localises to the golgi apparatus membrane. The protein resides in the prevacuolar compartment membrane. Its function is as follows. Required for retention of late Golgi membrane proteins. Component of the retrieval machinery that functions by direct interaction with the cytosolic tails of certain TGN membrane proteins during the sorting/budding process at the prevacuolar compartment. Binds phosphatidylinositol 3-phosphate (PtdIns(P3)). This chain is Sorting nexin-3 (SNX3), found in Saccharomyces cerevisiae (strain ATCC 204508 / S288c) (Baker's yeast).